Here is a 123-residue protein sequence, read N- to C-terminus: Small ribosomal subunit protein uS12 (123 aa).

Residue aspartate 89 is modified to 3-methylthioaspartic acid.

The protein belongs to the universal ribosomal protein uS12 family. As to quaternary structure, part of the 30S ribosomal subunit. Contacts proteins S8 and S17. May interact with IF1 in the 30S initiation complex.

In terms of biological role, with S4 and S5 plays an important role in translational accuracy. Functionally, interacts with and stabilizes bases of the 16S rRNA that are involved in tRNA selection in the A site and with the mRNA backbone. Located at the interface of the 30S and 50S subunits, it traverses the body of the 30S subunit contacting proteins on the other side and probably holding the rRNA structure together. The combined cluster of proteins S8, S12 and S17 appears to hold together the shoulder and platform of the 30S subunit. The protein is Small ribosomal subunit protein uS12 of Pelagibacter ubique (strain HTCC1062).